Here is a 227-residue protein sequence, read N- to C-terminus: Large ribosomal subunit protein uL3 (227 aa).

Positions 144–166 are disordered; it reads RRGPMAHGSKNHRLPGSTGPGTT.

This sequence belongs to the universal ribosomal protein uL3 family. As to quaternary structure, part of the 50S ribosomal subunit. Forms a cluster with proteins L14 and L19.

In terms of biological role, one of the primary rRNA binding proteins, it binds directly near the 3'-end of the 23S rRNA, where it nucleates assembly of the 50S subunit. This Trichodesmium erythraeum (strain IMS101) protein is Large ribosomal subunit protein uL3.